Reading from the N-terminus, the 211-residue chain is Regulator of G-protein signaling 2 (211 aa).

Residues 32-66 (KMKRTLLKDWKTRLSYFLQNSSTPGKPKTGKKSKQ) are necessary for membrane association. The segment at 79-116 (LWAEAFDELLASKYGLAAFRAFLKSEFCEENIEFWLAC) is necessary to inhibit protein synthesis. One can recognise an RGS domain in the interval 83–199 (AFDELLASKY…LESEFYQDLC (117 aa)).

Interacts with GNAQ. Does not interact with GNAI1 and GNAI3. Interacts with EIF2B5. Interacts with PRKG1 (isoform alpha). Post-translationally, phosphorylated by protein kinase C. Phosphorylation by PRKG1 leads to activation of RGS2 activity.

The protein resides in the cell membrane. It localises to the cytoplasm. Its subcellular location is the nucleus. It is found in the nucleolus. In terms of biological role, regulates G protein-coupled receptor signaling cascades. Inhibits signal transduction by increasing the GTPase activity of G protein alpha subunits, thereby driving them into their inactive GDP-bound form. It is involved in the negative regulation of the angiotensin-activated signaling pathway. Plays a role in the regulation of blood pressure in response to signaling via G protein-coupled receptors and GNAQ. Plays a role in regulating the constriction and relaxation of vascular smooth muscle. Binds EIF2B5 and blocks its activity, thereby inhibiting the translation of mRNA into protein. The sequence is that of Regulator of G-protein signaling 2 (Rgs2) from Rattus norvegicus (Rat).